The primary structure comprises 484 residues: Probable glycine dehydrogenase (decarboxylating) subunit 2 (484 aa).

Residue Lys264 is modified to N6-(pyridoxal phosphate)lysine.

It belongs to the GcvP family. C-terminal subunit subfamily. The glycine cleavage system is composed of four proteins: P, T, L and H. In this organism, the P 'protein' is a heterodimer of two subunits. Requires pyridoxal 5'-phosphate as cofactor.

The catalysed reaction is N(6)-[(R)-lipoyl]-L-lysyl-[glycine-cleavage complex H protein] + glycine + H(+) = N(6)-[(R)-S(8)-aminomethyldihydrolipoyl]-L-lysyl-[glycine-cleavage complex H protein] + CO2. Its function is as follows. The glycine cleavage system catalyzes the degradation of glycine. The P protein binds the alpha-amino group of glycine through its pyridoxal phosphate cofactor; CO(2) is released and the remaining methylamine moiety is then transferred to the lipoamide cofactor of the H protein. In Legionella pneumophila (strain Lens), this protein is Probable glycine dehydrogenase (decarboxylating) subunit 2.